Here is a 105-residue protein sequence, read N- to C-terminus: ATP-dependent Clp protease adapter protein ClpS (105 aa).

Residues 1–27 (MVVMSAPTEPKSRPGTTGQRESAPEDV) form a disordered region.

Belongs to the ClpS family. Binds to the N-terminal domain of the chaperone ClpA.

In terms of biological role, involved in the modulation of the specificity of the ClpAP-mediated ATP-dependent protein degradation. The protein is ATP-dependent Clp protease adapter protein ClpS of Mycolicibacterium paratuberculosis (strain ATCC BAA-968 / K-10) (Mycobacterium paratuberculosis).